We begin with the raw amino-acid sequence, 371 residues long: 4-hydroxybenzoate polyprenyltransferase, mitochondrial (371 aa).

The N-terminal 34 residues, 1-34 (MLGSRAAGFARGLRAVALAWLPGWRGRSFALARA), are a transit peptide targeting the mitochondrion. Topologically, residues 35-83 (AGAPHGGDLQPPACPEPRGRQLSLSAAAVVDSAPRPLQPYLRLMRLDKP) are mitochondrial matrix. The chain crosses the membrane as a helical span at residues 84–104 (IGTWLLYLPCTWSIGLAAEPG). At 105 to 108 (CFPD) the chain is on the mitochondrial intermembrane side. The chain crosses the membrane as a helical span at residues 109–129 (WYMLSLFGTGAILMRGAGCTI). At 130-148 (NDMWDQDYDKKVTRTANRP) the chain is on the mitochondrial matrix side. A helical transmembrane segment spans residues 149–169 (IAAGDISTFQSFVFLGGQLTL). Residues 170–172 (ALG) are Mitochondrial intermembrane-facing. The helical transmembrane segment at 173-193 (VLLCLNYYSIALGAGSLLLVI) threads the bilayer. The Mitochondrial matrix segment spans residues 194 to 203 (TYPLMKRISY). The helical transmembrane segment at 204 to 224 (WPQLALGLTFNWGALLGWSAI) threads the bilayer. At 225–231 (KGSCDPS) the chain is on the mitochondrial intermembrane side. Residues 232-252 (VCLPLYFSGVMWTLIYDTIYA) traverse the membrane as a helical segment. Over 253 to 277 (HQDKRDDVLIGLKSTALRFGENTKP) the chain is Mitochondrial matrix. Residues 278–298 (WLSGFSVAMLGALSLVGVNSG) form a helical membrane-spanning segment. The Mitochondrial intermembrane portion of the chain corresponds to 299-300 (QT). A helical membrane pass occupies residues 301-321 (APYYAALGAVGAHLTHQIYTL). Over 322-332 (DIHRPEDCWNK) the chain is Mitochondrial matrix. A helical membrane pass occupies residues 333 to 353 (FISNRTLGLIVFLGIVLGNLW). Residues 354-371 (KEKKTDKTKKGIENKIEN) lie on the Mitochondrial intermembrane side of the membrane.

It belongs to the UbiA prenyltransferase family. It depends on Mg(2+) as a cofactor. Widely expressed. Present in all of the tissues tested. Expressed at higher level in skeletal muscle, adrenal glands and the heart.

The protein localises to the mitochondrion inner membrane. It carries out the reaction an all-trans-polyprenyl diphosphate + 4-hydroxybenzoate = a 4-hydroxy-3-(all-trans-polyprenyl)benzoate + diphosphate. The catalysed reaction is all-trans-decaprenyl diphosphate + 4-hydroxybenzoate = 4-hydroxy-3-(all-trans-decaprenyl)benzoate + diphosphate. It catalyses the reaction all-trans-nonaprenyl diphosphate + 4-hydroxybenzoate = 4-hydroxy-3-(all-trans-nonaprenyl)benzoate + diphosphate. The protein operates within cofactor biosynthesis; ubiquinone biosynthesis. Its function is as follows. Mediates the second step in the final reaction sequence of coenzyme Q (CoQ) biosynthesis. Catalyzes the prenylation of para-hydroxybenzoate (PHB) with an all-trans polyprenyl donor (such as all-trans-decaprenyl diphosphate). The length of the polyprenyl side chain varies depending on the species, in humans, the side chain is comprised of 10 isoprenyls (decaprenyl) producing CoQ10 (also known as ubiquinone), whereas rodents predominantly generate CoQ9. However, this specificity is not complete, human tissues have low amounts of CoQ9 and rodent organs contain some CoQ10. Plays a central role in the biosynthesis of CoQ10. CoQ10 is a vital molecule that transports electrons from mitochondrial respiratory chain complexes. CoQs also function as cofactors for uncoupling protein and play a role as regulators of the extracellularly-induced ceramide-dependent apoptotic pathway. Regulates mitochondrial permeability transition pore (mPTP) opening and ROS production (pivotal events in cell death) in a tissue specific manner. This chain is 4-hydroxybenzoate polyprenyltransferase, mitochondrial, found in Homo sapiens (Human).